A 478-amino-acid chain; its full sequence is Zinc metalloproteinase/disintegrin VMP-II (478 aa).

The first 20 residues, 1-20, serve as a signal peptide directing secretion; sequence MIQVLLVTICLAVFPYQGSS. Residues 21–190 constitute a propeptide that is removed on maturation; sequence IILESGNVND…KASQLNLTPE (170 aa). The region spanning 197–393 is the Peptidase M12B domain; sequence RYIELVIVAD…HNPQCMLNEP (197 aa). The Ca(2+) site is built by E200 and D284. Intrachain disulfides connect C308/C388, C348/C372, and C350/C355. H333 contributes to the Zn(2+) binding site. Residue E334 is part of the active site. Residues H337 and H343 each coordinate Zn(2+). Residues C388 and N391 each coordinate Ca(2+). The propeptide occupies 394 to 405; that stretch reads LGTDTVSRNELL. Residues 414 to 478 enclose the Disintegrin domain; it reads GSPANPCCDA…ADCPRNRFHA (65 aa). Cystine bridges form between C420–C443, C434–C440, C439–C464, and C452–C471. The short motif at 456–458 is the Cell attachment site element; sequence RGD.

The protein belongs to the venom metalloproteinase (M12B) family. P-II subfamily. P-IIe sub-subfamily. As to quaternary structure, heterodimer; disulfide-linked (disintegrin). It depends on Zn(2+) as a cofactor. In terms of tissue distribution, expressed by the venom gland.

The protein localises to the secreted. Impairs hemostasis in the envenomed animal. Functionally, this recombinant protein inhibits ADP-induced platelet aggregation in whole human blood and this effect is concentration-dependent with an IC(50) of 34 nM. This chain is Zinc metalloproteinase/disintegrin VMP-II, found in Crotalus viridis viridis (Prairie rattlesnake).